Consider the following 103-residue polypeptide: Large ribosomal subunit protein P2 (103 aa).

A disordered region spans residues 64 to 103 (LAISSSQKSEPAQPADTAESTQATENKEEEDEDFDIFAAF). The segment covering 90–103 (KEEEDEDFDIFAAF) has biased composition (acidic residues).

This sequence belongs to the eukaryotic ribosomal protein P1/P2 family. As to quaternary structure, component of the large ribosomal subunit.

Its subcellular location is the cytoplasm. Functionally, plays an important role in the elongation step of protein synthesis. The chain is Large ribosomal subunit protein P2 (RPP2A) from Encephalitozoon cuniculi (strain GB-M1) (Microsporidian parasite).